The primary structure comprises 732 residues: Protein kinase YpkA (732 aa).

Residues 136–408 (VAETDKFAEG…SNEARLHEFL (273 aa)) enclose the Protein kinase domain. ATP-binding positions include 142–150 (FAEGESHIS) and Lys-163. The Proton acceptor role is filled by Asp-270.

The protein belongs to the protein kinase superfamily. Ser/Thr protein kinase family.

The protein localises to the secreted. It catalyses the reaction L-seryl-[protein] + ATP = O-phospho-L-seryl-[protein] + ADP + H(+). The enzyme catalyses L-threonyl-[protein] + ATP = O-phospho-L-threonyl-[protein] + ADP + H(+). Functionally, acts as a virulence determinant. The sequence is that of Protein kinase YpkA (ypkA) from Yersinia pestis.